A 101-amino-acid chain; its full sequence is Small ribosomal subunit protein uS14 (101 aa).

It belongs to the universal ribosomal protein uS14 family. Part of the 30S ribosomal subunit. Contacts proteins S3 and S10.

Functionally, binds 16S rRNA, required for the assembly of 30S particles and may also be responsible for determining the conformation of the 16S rRNA at the A site. The chain is Small ribosomal subunit protein uS14 from Rhizobium meliloti (strain 1021) (Ensifer meliloti).